The sequence spans 323 residues: MSSSLEQLKATGTTVVSDSGDFASIGKYKPQDATTNPSLILAASKKAEYAKLIDVAIDYAKQKGGPIDQQVDDALDRLLVEFGKEILKIIPGKVSTEVDARYSFDTEASVNKALHLIELYGEQGISKDRILIKIAATWEGIKAAEILQRDHGINTNLTLMFSLVQAIGAAEAGAYLISPFVGRILDWFKASTKKEYSKEEDPGVQSVKTIFNYYKKYGYNTIVMGASFRNTGEITELAGCDYLTISPNLLEELLNSNEPVPKKLDASQASSLDIEKKSYINDEALFRFDFNEDQMAVEKLREGISKFAADAVTLKSILKEKLA.

K133 serves as the catalytic Schiff-base intermediate with substrate.

Belongs to the transaldolase family. Type 1 subfamily. Monomer.

The catalysed reaction is D-sedoheptulose 7-phosphate + D-glyceraldehyde 3-phosphate = D-erythrose 4-phosphate + beta-D-fructose 6-phosphate. The protein operates within carbohydrate degradation; pentose phosphate pathway; D-glyceraldehyde 3-phosphate and beta-D-fructose 6-phosphate from D-ribose 5-phosphate and D-xylulose 5-phosphate (non-oxidative stage): step 2/3. Functionally, transaldolase important for the balance of metabolites in the pentose-phosphate pathway. Involved in xylose fermentation to ethanol. The sequence is that of Transaldolase from Fusarium oxysporum f. sp. lycopersici (strain 4287 / CBS 123668 / FGSC 9935 / NRRL 34936) (Fusarium vascular wilt of tomato).